The primary structure comprises 385 residues: Homoserine O-succinyltransferase (385 aa).

In terms of domain architecture, AB hydrolase-1 spans 51 to 359 (NAILICHALS…EATEGHDAFL (309 aa)). S157 functions as the Nucleophile in the catalytic mechanism. R227 provides a ligand contact to substrate. Catalysis depends on residues D322 and H355. D356 serves as a coordination point for substrate.

It belongs to the AB hydrolase superfamily. MetX family. As to quaternary structure, homodimer.

Its subcellular location is the cytoplasm. The catalysed reaction is L-homoserine + succinyl-CoA = O-succinyl-L-homoserine + CoA. It participates in amino-acid biosynthesis; L-methionine biosynthesis via de novo pathway; O-succinyl-L-homoserine from L-homoserine: step 1/1. Transfers a succinyl group from succinyl-CoA to L-homoserine, forming succinyl-L-homoserine. The chain is Homoserine O-succinyltransferase from Marinomonas sp. (strain MWYL1).